The following is a 989-amino-acid chain: Cellulose synthase A catalytic subunit 4 [UDP-forming] (989 aa).

Over 1 to 184 (MMESGVPPCA…SRIIPISKNK (184 aa)) the chain is Cytoplasmic. Positions 9, 12, 20, 23, 28, 31, 43, and 46 each coordinate Zn(2+). Residues 9–47 (CAACGDDAHAACRACSYALCKACLDEDAAEGRTTCARCG) form an RING-type; degenerate zinc finger. A compositionally biased stretch (basic residues) spans 138-149 (KKEKKASAKKAA). Positions 138-158 (KKEKKASAKKAAAKAQAPPVE) are disordered. The helical transmembrane segment at 185 to 205 (LTPYRAVIIMRLVVLGLFFHY) threads the bilayer. The Extracellular segment spans residues 206-213 (RITNPVYS). Residues 214–234 (AFGLWMTSVICEIWFGFSWIL) form a helical membrane-spanning segment. Over 235-772 (DQFPKWCPIN…INTIVYPFTS (538 aa)) the chain is Cytoplasmic. The UDP-alpha-D-glucose site is built by Ser-272, Lys-278, Glu-279, and Asp-308. The active site involves Asp-308. A coiled-coil region spans residues 362 to 389 (VKERRAMKRDYEEYKVRINALVAKAQKT). Lys-449 lines the UDP-alpha-D-glucose pocket. Mn(2+) is bound by residues Lys-450 and Asp-474. Asp-688 is an active-site residue. A helical membrane pass occupies residues 773–793 (LPLIAYCCLPAICLLTGKFII). Over 794–798 (PTLSN) the chain is Extracellular. The helical transmembrane segment at 799-819 (AATIWFLGLFISIIVTSVLEL) threads the bilayer. Residues 820 to 835 (RWSGIGIEDWWRNEQF) are Cytoplasmic-facing. The chain crosses the membrane as a helical span at residues 836 to 856 (WVIGGVSAHLFAVFQGILKMI). Residues 857-884 (AGLDTNFTVTAKATDDTEFGELYVFKWT) lie on the Extracellular side of the membrane. Asn-862 carries an N-linked (GlcNAc...) asparagine glycan. The helical transmembrane segment at 885–905 (TVLIPPTSILVLNLVGVVAGF) threads the bilayer. Residues 906 to 916 (SDALNSGYESW) lie on the Cytoplasmic side of the membrane. Residues 917-937 (GPLFGKVFFAMWVIMHLYPFL) form a helical membrane-spanning segment. The Extracellular portion of the chain corresponds to 938–946 (KGLMGRQNR). The chain crosses the membrane as a helical span at residues 947 to 967 (TPTIVVLWSVLLASVFSLLWV). At 968 to 989 (KIDPFIGSSETTTTNSCANFDC) the chain is on the cytoplasmic side.

The protein belongs to the glycosyltransferase 2 family. Plant cellulose synthase subfamily. The cofactor is Mn(2+). It depends on Zn(2+) as a cofactor.

It is found in the cell membrane. It catalyses the reaction [(1-&gt;4)-beta-D-glucosyl](n) + UDP-alpha-D-glucose = [(1-&gt;4)-beta-D-glucosyl](n+1) + UDP + H(+). It functions in the pathway glycan metabolism; plant cellulose biosynthesis. Catalytic subunit of cellulose synthase terminal complexes ('rosettes'), required for beta-1,4-glucan microfibril crystallization, a major mechanism of the cell wall formation. Involved in the secondary cell wall formation. In Oryza sativa subsp. indica (Rice), this protein is Cellulose synthase A catalytic subunit 4 [UDP-forming] (CESA4).